Here is a 151-residue protein sequence, read N- to C-terminus: MGEPILFLLILFIIGFIAKNQSLMIAVAILLIIKMVGMGEKWLPIVHEKGIHWGVTVITIAVLAPIATGEIGFRQLIASLQSLSAWIALLSGIFVALVAKGGVTLLATDPHMTAALVFGTIIAVSLFHGVAVGPLIGAGIAYMVMKVIEYF.

4 helical membrane-spanning segments follow: residues 5–25, 53–73, 86–106, and 116–136; these read ILFLLILFIIGFIAKNQSLMI, WGVTVITIAVLAPIATGEIGF, WIALLSGIFVALVAKGGVTLL, and LVFGTIIAVSLFHGVAVGPLI.

The protein belongs to the UPF0756 family.

The protein resides in the cell membrane. The sequence is that of UPF0756 membrane protein GWCH70_2680 from Geobacillus sp. (strain WCH70).